Here is a 361-residue protein sequence, read N- to C-terminus: Protein RecA (361 aa).

68 to 75 serves as a coordination point for ATP; the sequence is GPESSGKT. The interval 342 to 361 is disordered; that stretch reads PEGAKENISAKDDVAVDTKE. Over residues 344-361 the composition is skewed to basic and acidic residues; that stretch reads GAKENISAKDDVAVDTKE.

This sequence belongs to the RecA family.

It is found in the cytoplasm. In terms of biological role, can catalyze the hydrolysis of ATP in the presence of single-stranded DNA, the ATP-dependent uptake of single-stranded DNA by duplex DNA, and the ATP-dependent hybridization of homologous single-stranded DNAs. It interacts with LexA causing its activation and leading to its autocatalytic cleavage. The chain is Protein RecA from Clostridium beijerinckii (strain ATCC 51743 / NCIMB 8052) (Clostridium acetobutylicum).